The chain runs to 185 residues: Cuticle protein 18.6, isoform A (185 aa).

7 repeat units span residues Ala-21 to Ala-24, Ala-33 to Val-36, Ala-41 to Val-44, Ala-54 to Ala-57, Ala-133 to Val-136, Ala-139 to Val-142, and Ala-150 to Val-153. The region spanning His-64–Ala-134 is the Chitin-binding type R&amp;R domain.

Component of the cuticle of migratory locust which contains more than 100 different structural proteins. The polypeptide is Cuticle protein 18.6, isoform A (Locusta migratoria (Migratory locust)).